We begin with the raw amino-acid sequence, 68 residues long: Probable Sec-independent protein translocase protein TatE (68 aa).

Residues 1-21 form a helical membrane-spanning segment; sequence MGEISITKLLVVAALIILVFG. Residues 43–68 are disordered; that stretch reads MNEDDDSAKKTTAEEEAPAQKLSHKE.

Belongs to the TatA/E family. TatE subfamily.

It is found in the cell inner membrane. Its function is as follows. Part of the twin-arginine translocation (Tat) system that transports large folded proteins containing a characteristic twin-arginine motif in their signal peptide across membranes. TatE shares overlapping functions with TatA. The chain is Probable Sec-independent protein translocase protein TatE from Klebsiella pneumoniae subsp. pneumoniae (strain ATCC 700721 / MGH 78578).